The chain runs to 444 residues: Serine--tRNA ligase (444 aa).

An L-serine-binding site is contributed by 249 to 251 (TAE). Residues 280-282 (RRE) and Val296 each bind ATP. An L-serine-binding site is contributed by Glu303. 367-370 (EIVS) lines the ATP pocket. Residue Thr401 coordinates L-serine.

This sequence belongs to the class-II aminoacyl-tRNA synthetase family. Type-1 seryl-tRNA synthetase subfamily. In terms of assembly, homodimer. The tRNA molecule binds across the dimer.

It is found in the cytoplasm. The enzyme catalyses tRNA(Ser) + L-serine + ATP = L-seryl-tRNA(Ser) + AMP + diphosphate + H(+). The catalysed reaction is tRNA(Sec) + L-serine + ATP = L-seryl-tRNA(Sec) + AMP + diphosphate + H(+). It participates in aminoacyl-tRNA biosynthesis; selenocysteinyl-tRNA(Sec) biosynthesis; L-seryl-tRNA(Sec) from L-serine and tRNA(Sec): step 1/1. Its function is as follows. Catalyzes the attachment of serine to tRNA(Ser). Is also able to aminoacylate tRNA(Sec) with serine, to form the misacylated tRNA L-seryl-tRNA(Sec), which will be further converted into selenocysteinyl-tRNA(Sec). This chain is Serine--tRNA ligase, found in Picrophilus torridus (strain ATCC 700027 / DSM 9790 / JCM 10055 / NBRC 100828 / KAW 2/3).